A 299-amino-acid chain; its full sequence is Oxygen-dependent coproporphyrinogen-III oxidase (299 aa).

Serine 92 provides a ligand contact to substrate. Histidine 96 and histidine 106 together coordinate a divalent metal cation. The active-site Proton donor is histidine 106. 108-110 (NVR) contacts substrate. Residues histidine 145 and histidine 175 each coordinate a divalent metal cation. Residues 240-275 (YVEFNLVWDRGTLFGLQTGGRTESILMSMPPLVRWE) are important for dimerization. Residue 258–260 (GGR) participates in substrate binding.

This sequence belongs to the aerobic coproporphyrinogen-III oxidase family. In terms of assembly, homodimer. The cofactor is a divalent metal cation.

It localises to the cytoplasm. The catalysed reaction is coproporphyrinogen III + O2 + 2 H(+) = protoporphyrinogen IX + 2 CO2 + 2 H2O. It functions in the pathway porphyrin-containing compound metabolism; protoporphyrin-IX biosynthesis; protoporphyrinogen-IX from coproporphyrinogen-III (O2 route): step 1/1. In terms of biological role, involved in the heme biosynthesis. Catalyzes the aerobic oxidative decarboxylation of propionate groups of rings A and B of coproporphyrinogen-III to yield the vinyl groups in protoporphyrinogen-IX. The chain is Oxygen-dependent coproporphyrinogen-III oxidase from Salmonella paratyphi B (strain ATCC BAA-1250 / SPB7).